The chain runs to 382 residues: Bifunctional enzyme IspD/IspF (382 aa).

The interval 1-225 is 2-C-methyl-D-erythritol 4-phosphate cytidylyltransferase; that stretch reads MTFSVVIVAA…EHLAGVARVT (225 aa). Residues 226-382 form a 2-C-methyl-D-erythritol 2,4-cyclodiphosphate synthase region; that stretch reads RVGQGFDAHR…SAVVAVETPA (157 aa). A divalent metal cation is bound by residues D232 and H234. 4-CDP-2-C-methyl-D-erythritol 2-phosphate is bound by residues 232–234 and 258–259; these read DAH and HS. A divalent metal cation is bound at residue H266. 4-CDP-2-C-methyl-D-erythritol 2-phosphate is bound by residues 280–282, 356–359, F363, and R366; these read DIG and TTTE.

It in the N-terminal section; belongs to the IspD/TarI cytidylyltransferase family. IspD subfamily. This sequence in the C-terminal section; belongs to the IspF family. A divalent metal cation is required as a cofactor.

It catalyses the reaction 2-C-methyl-D-erythritol 4-phosphate + CTP + H(+) = 4-CDP-2-C-methyl-D-erythritol + diphosphate. It carries out the reaction 4-CDP-2-C-methyl-D-erythritol 2-phosphate = 2-C-methyl-D-erythritol 2,4-cyclic diphosphate + CMP. Its pathway is isoprenoid biosynthesis; isopentenyl diphosphate biosynthesis via DXP pathway; isopentenyl diphosphate from 1-deoxy-D-xylulose 5-phosphate: step 2/6. It participates in isoprenoid biosynthesis; isopentenyl diphosphate biosynthesis via DXP pathway; isopentenyl diphosphate from 1-deoxy-D-xylulose 5-phosphate: step 4/6. Functionally, bifunctional enzyme that catalyzes the formation of 4-diphosphocytidyl-2-C-methyl-D-erythritol from CTP and 2-C-methyl-D-erythritol 4-phosphate (MEP) (IspD), and catalyzes the conversion of 4-diphosphocytidyl-2-C-methyl-D-erythritol 2-phosphate (CDP-ME2P) to 2-C-methyl-D-erythritol 2,4-cyclodiphosphate (ME-CPP) with a corresponding release of cytidine 5-monophosphate (CMP) (IspF). This chain is Bifunctional enzyme IspD/IspF, found in Caulobacter vibrioides (strain ATCC 19089 / CIP 103742 / CB 15) (Caulobacter crescentus).